Reading from the N-terminus, the 178-residue chain is Large ribosomal subunit protein uL6 (178 aa).

This sequence belongs to the universal ribosomal protein uL6 family. Part of the 50S ribosomal subunit.

Its function is as follows. This protein binds to the 23S rRNA, and is important in its secondary structure. It is located near the subunit interface in the base of the L7/L12 stalk, and near the tRNA binding site of the peptidyltransferase center. This chain is Large ribosomal subunit protein uL6, found in Campylobacter concisus (strain 13826).